A 194-amino-acid chain; its full sequence is NADH-quinone oxidoreductase subunit B (194 aa).

The interval 1–26 (MGLTPSATKPEIAQAPQGIVDPSTGR) is disordered. 4 residues coordinate [4Fe-4S] cluster: cysteine 73, cysteine 74, cysteine 138, and cysteine 168.

It belongs to the complex I 20 kDa subunit family. In terms of assembly, NDH-1 is composed of 14 different subunits. Subunits NuoB, C, D, E, F, and G constitute the peripheral sector of the complex. [4Fe-4S] cluster is required as a cofactor.

The protein resides in the cell inner membrane. The enzyme catalyses a quinone + NADH + 5 H(+)(in) = a quinol + NAD(+) + 4 H(+)(out). NDH-1 shuttles electrons from NADH, via FMN and iron-sulfur (Fe-S) centers, to quinones in the respiratory chain. The immediate electron acceptor for the enzyme in this species is believed to be ubiquinone. Couples the redox reaction to proton translocation (for every two electrons transferred, four hydrogen ions are translocated across the cytoplasmic membrane), and thus conserves the redox energy in a proton gradient. The sequence is that of NADH-quinone oxidoreductase subunit B from Xanthobacter autotrophicus (strain ATCC BAA-1158 / Py2).